A 191-amino-acid polypeptide reads, in one-letter code: NF-kappa-B inhibitor-interacting Ras-like protein 2 (191 aa).

Residues 1–191 (MGKSCKVVVC…KNKGSGSLDG (191 aa)) are small GTPase-like. GTP is bound at residue 11–18 (GQASVGKT). Positions 35-43 (MIETQEDIY) match the Effector region motif. Residues 61 to 65 (DTRGL) and 120 to 123 (NKCD) contribute to the GTP site. The disordered stretch occupies residues 169-191 (TQPQSKSAFPLSRKNKGSGSLDG).

This sequence belongs to the small GTPase superfamily. Ras family. KappaB-Ras subfamily. As to quaternary structure, interacts with both NF-kappa-B inhibitor alpha (NFKBIA) and beta (NFKBIB) in vitro. However, it probably only interacts with NFKBIB in vivo. Interacts with GFOD1. As to expression, widely expressed.

It is found in the cytoplasm. In terms of biological role, atypical Ras-like protein that acts as a potent regulator of NF-kappa-B activity by preventing the degradation of NF-kappa-B inhibitor beta (NFKBIB) by most signals, explaining why NFKBIB is more resistant to degradation. May act by blocking phosphorylation of NFKBIB and nuclear localization of p65/RELA NF-kappa-B subunit. It is unclear whether it acts as a GTPase. Both GTP- and GDP-bound forms block phosphorylation of NFKBIB. This chain is NF-kappa-B inhibitor-interacting Ras-like protein 2 (NKIRAS2), found in Homo sapiens (Human).